The following is a 74-amino-acid chain: Exodeoxyribonuclease 7 small subunit (74 aa).

This sequence belongs to the XseB family. In terms of assembly, heterooligomer composed of large and small subunits.

The protein resides in the cytoplasm. The catalysed reaction is Exonucleolytic cleavage in either 5'- to 3'- or 3'- to 5'-direction to yield nucleoside 5'-phosphates.. Bidirectionally degrades single-stranded DNA into large acid-insoluble oligonucleotides, which are then degraded further into small acid-soluble oligonucleotides. The polypeptide is Exodeoxyribonuclease 7 small subunit (Clostridium botulinum (strain Eklund 17B / Type B)).